A 451-amino-acid chain; its full sequence is Signal recognition particle protein (451 aa).

GTP-binding positions include 107–114 (GLQGSGKT), 190–194 (DTAGR), and 248–251 (TKTD).

The protein belongs to the GTP-binding SRP family. SRP54 subfamily. In terms of assembly, part of the signal recognition particle protein translocation system, which is composed of SRP and FtsY. SRP is a ribonucleoprotein composed of Ffh and a 4.5S RNA molecule.

It is found in the cytoplasm. It carries out the reaction GTP + H2O = GDP + phosphate + H(+). In terms of biological role, involved in targeting and insertion of nascent membrane proteins into the cytoplasmic membrane. Binds to the hydrophobic signal sequence of the ribosome-nascent chain (RNC) as it emerges from the ribosomes. The SRP-RNC complex is then targeted to the cytoplasmic membrane where it interacts with the SRP receptor FtsY. Interaction with FtsY leads to the transfer of the RNC complex to the Sec translocase for insertion into the membrane, the hydrolysis of GTP by both Ffh and FtsY, and the dissociation of the SRP-FtsY complex into the individual components. The protein is Signal recognition particle protein of Buchnera aphidicola subsp. Acyrthosiphon pisum (strain APS) (Acyrthosiphon pisum symbiotic bacterium).